We begin with the raw amino-acid sequence, 121 residues long: Large ribosomal subunit protein uL18 (121 aa).

The protein belongs to the universal ribosomal protein uL18 family. In terms of assembly, part of the 50S ribosomal subunit; part of the 5S rRNA/L5/L18/L25 subcomplex. Contacts the 5S and 23S rRNAs.

In terms of biological role, this is one of the proteins that bind and probably mediate the attachment of the 5S RNA into the large ribosomal subunit, where it forms part of the central protuberance. The protein is Large ribosomal subunit protein uL18 of Geobacter metallireducens (strain ATCC 53774 / DSM 7210 / GS-15).